Reading from the N-terminus, the 213-residue chain is Heavy metal-binding protein HIP (213 aa).

One can recognise a C1q domain in the interval 80-213 (FKSHHVAFSA…MSTFTGFMLH (134 aa)).

As to expression, pallium, gill and liver.

Its subcellular location is the secreted. Functionally, binds heavy metals. May function as a carrier of divalent cations in plasma. The sequence is that of Heavy metal-binding protein HIP from Mytilus edulis (Blue mussel).